The primary structure comprises 214 residues: Probable nicotinate-nucleotide adenylyltransferase (214 aa).

The protein belongs to the NadD family.

The catalysed reaction is nicotinate beta-D-ribonucleotide + ATP + H(+) = deamido-NAD(+) + diphosphate. The protein operates within cofactor biosynthesis; NAD(+) biosynthesis; deamido-NAD(+) from nicotinate D-ribonucleotide: step 1/1. In terms of biological role, catalyzes the reversible adenylation of nicotinate mononucleotide (NaMN) to nicotinic acid adenine dinucleotide (NaAD). The sequence is that of Probable nicotinate-nucleotide adenylyltransferase from Rhodopirellula baltica (strain DSM 10527 / NCIMB 13988 / SH1).